We begin with the raw amino-acid sequence, 222 residues long: Probable septum site-determining protein MinC (222 aa).

This sequence belongs to the MinC family. In terms of assembly, interacts with MinD and FtsZ.

Cell division inhibitor that blocks the formation of polar Z ring septums. Rapidly oscillates between the poles of the cell to destabilize FtsZ filaments that have formed before they mature into polar Z rings. Prevents FtsZ polymerization. This chain is Probable septum site-determining protein MinC, found in Lysinibacillus sphaericus (strain C3-41).